Here is a 240-residue protein sequence, read N- to C-terminus: UDP-2,3-diacylglucosamine hydrolase (240 aa).

Mn(2+) contacts are provided by Asp-9, His-11, Asp-43, Asn-81, and His-116. 81–82 is a binding site for substrate; it reads NR. 5 residues coordinate substrate: Asp-124, Ser-162, Lys-166, Lys-169, and His-197. Positions 197 and 199 each coordinate Mn(2+).

It belongs to the LpxH family. Requires Mn(2+) as cofactor.

It localises to the cell inner membrane. The catalysed reaction is UDP-2-N,3-O-bis[(3R)-3-hydroxytetradecanoyl]-alpha-D-glucosamine + H2O = 2-N,3-O-bis[(3R)-3-hydroxytetradecanoyl]-alpha-D-glucosaminyl 1-phosphate + UMP + 2 H(+). It functions in the pathway glycolipid biosynthesis; lipid IV(A) biosynthesis; lipid IV(A) from (3R)-3-hydroxytetradecanoyl-[acyl-carrier-protein] and UDP-N-acetyl-alpha-D-glucosamine: step 4/6. Functionally, hydrolyzes the pyrophosphate bond of UDP-2,3-diacylglucosamine to yield 2,3-diacylglucosamine 1-phosphate (lipid X) and UMP by catalyzing the attack of water at the alpha-P atom. Involved in the biosynthesis of lipid A, a phosphorylated glycolipid that anchors the lipopolysaccharide to the outer membrane of the cell. The polypeptide is UDP-2,3-diacylglucosamine hydrolase (Neisseria meningitidis serogroup A / serotype 4A (strain DSM 15465 / Z2491)).